Here is a 1145-residue protein sequence, read N- to C-terminus: DNA mismatch repair protein msh-3 (1145 aa).

2 disordered regions span residues 1 to 183 and 857 to 879; these read MAGP…GAKT and SSSA…LAQL. Positions 13–33 are enriched in polar residues; sequence ASISSFFTPRNTSPLVNLSQN. Residues 121-131 are compositionally biased toward basic and acidic residues; the sequence is AERKKKEELHR. A compositionally biased stretch (acidic residues) spans 158-169; it reads GEGEEGEDDEEE. Residues 183–307 are mispair-binding domain; sequence TGKLTPMELQ…RKLTNVYTKG (125 aa). Position 882–889 (882–889) interacts with ATP; that stretch reads GPNMGGKS. The tract at residues 1030-1056 is disordered; the sequence is KSRTSMDDDAMEVDGDGDGQEGAGADK. Residues 1036 to 1048 show a composition bias toward acidic residues; sequence DDDAMEVDGDGDG.

Belongs to the DNA mismatch repair MutS family. MSH3 subfamily. As to quaternary structure, heterodimer consisting of msh-2-msh-3 (MutS beta). Forms a ternary complex with MutL alpha (mlh-1-pms-1).

The protein resides in the nucleus. Its function is as follows. Component of the post-replicative DNA mismatch repair system (MMR). Heterodimerizes with msh-2 to form MutS beta, which binds to DNA mismatches thereby initiating DNA repair. Msh-3 provides substrate-binding and substrate specificity to the complex. When bound, the MutS beta heterodimer bends the DNA helix and shields approximately 20 base pairs. Acts mainly to repair insertion-deletion loops (IDLs) from 2 to 13 nucleotides in size, but can also repair base-base and single insertion-deletion mismatches that occur during replication. After mismatch binding, forms a ternary complex with the MutL alpha heterodimer, which is thought to be responsible for directing the downstream MMR events, including strand discrimination, excision, and resynthesis. ATP binding and hydrolysis play a pivotal role in mismatch repair functions. This Neurospora crassa (strain ATCC 24698 / 74-OR23-1A / CBS 708.71 / DSM 1257 / FGSC 987) protein is DNA mismatch repair protein msh-3 (msh-3).